The sequence spans 910 residues: Leucine--tRNA ligase (910 aa).

The 'HIGH' region motif lies at 50 to 60; that stretch reads PYTNGSLHVGH. The short motif at 611-615 is the 'KMSKS' region element; it reads KISKS. Lys614 contributes to the ATP binding site.

The protein belongs to the class-I aminoacyl-tRNA synthetase family.

The protein resides in the cytoplasm. It catalyses the reaction tRNA(Leu) + L-leucine + ATP = L-leucyl-tRNA(Leu) + AMP + diphosphate. In Thermoplasma volcanium (strain ATCC 51530 / DSM 4299 / JCM 9571 / NBRC 15438 / GSS1), this protein is Leucine--tRNA ligase.